We begin with the raw amino-acid sequence, 543 residues long: Cobyric acid synthase (543 aa).

Residues methionine 260–phenylalanine 483 enclose the GATase cobBQ-type domain. Cysteine 346 acts as the Nucleophile in catalysis. The active site involves histidine 475.

This sequence belongs to the CobB/CobQ family. CobQ subfamily.

It functions in the pathway cofactor biosynthesis; adenosylcobalamin biosynthesis. Catalyzes amidations at positions B, D, E, and G on adenosylcobyrinic A,C-diamide. NH(2) groups are provided by glutamine, and one molecule of ATP is hydrogenolyzed for each amidation. The protein is Cobyric acid synthase of Nitratidesulfovibrio vulgaris (strain ATCC 29579 / DSM 644 / CCUG 34227 / NCIMB 8303 / VKM B-1760 / Hildenborough) (Desulfovibrio vulgaris).